The following is a 34-amino-acid chain: Cytochrome b6-f complex subunit 8 (34 aa).

Residues 3–23 (LLTFGWAALLAVFTFSLAMVV) traverse the membrane as a helical segment.

This sequence belongs to the PetN family. In terms of assembly, the 4 large subunits of the cytochrome b6-f complex are cytochrome b6, subunit IV (17 kDa polypeptide, PetD), cytochrome f and the Rieske protein, while the 4 small subunits are PetG, PetL, PetM and PetN. The complex functions as a dimer.

It is found in the cellular thylakoid membrane. Its function is as follows. Component of the cytochrome b6-f complex, which mediates electron transfer between photosystem II (PSII) and photosystem I (PSI), cyclic electron flow around PSI, and state transitions. This is Cytochrome b6-f complex subunit 8 from Synechococcus elongatus (strain ATCC 33912 / PCC 7942 / FACHB-805) (Anacystis nidulans R2).